The following is an 83-amino-acid chain: Alpha-toxin CvIV4 (83 aa).

Residues 1 to 19 (MNYFILILVAALLILDVNC) form the signal peptide. The 59-residue stretch at 21-79 (KDGYPVEHSGCKYTCWKNEYCDKVCKDLKGEGGYCYINLTCWCTGLPDNVPLKTNQRCN) folds into the LCN-type CS-alpha/beta domain. 4 cysteine pairs are disulfide-bonded: C31/C78, C35/C55, C41/C61, and C45/C63.

It belongs to the long (4 C-C) scorpion toxin superfamily. Sodium channel inhibitor family. Expressed by the venom gland.

It localises to the secreted. Its function is as follows. This toxin significantly slows the fast inactivation of Nav1.2/SCN2A (EC(50)=580 nM), Nav1.3/SCN3A (EC(50)=1310 nM), Nav1.4/SCN4A (EC(50)=530 nM), and Nav1.7/SCN9A (EC(50)=1340 nM). The toxin does not affect the peak amplitude of Nav1.7 currents. On all channels cited above, the toxin requires depolarizing potentials to slow channel inactivation. In addition, the toxin has no or very weak effects on the voltage-dependence of steady-state inactivation, and on voltage-dependence of activation. In vivo, it produces paw licking in mice equivalent to the effects of whole venom. The polypeptide is Alpha-toxin CvIV4 (Centruroides vittatus (Striped bark scorpion)).